The chain runs to 427 residues: MAIQRPKGTNDLLPSGSPKTEAFQRAAAHEWLIAQAREVLERAGAQRIDTPMFEEAELVKRGVGGSTDIVRKEMFTVYYFGDHGGYVLRPEGTASIVRAYLENGLKQLPAPLKLWTSGPMFRAERHQKGRYRQFTQVDYEVLGSADALVDAEAIALMVAVVQKLGLRGVRVKLGSIGDPEDRERYNAYLRDLFSPHLGRLSDDSKDRLERNPMRILDSKSASDQELLAELSVRPMLDFLGEGAAADFRQVQAYLSDWGVPFDLDPSIVRGLDYYRRTAWELHYEGIGAKSALGGGGRYDGLSEQLGGGSVPGIGWAFGVERLLLALEQEGIEIPGSGGPQLYVAALDEENVPLAARVALAARASCRAEFAYRAMKPGSAFKDAERRGAVWVGLIGSEEAAAGTLSLKNLHTGEQKTVPVGELGQALA.

It belongs to the class-II aminoacyl-tRNA synthetase family. As to quaternary structure, homodimer.

Its subcellular location is the cytoplasm. The enzyme catalyses tRNA(His) + L-histidine + ATP = L-histidyl-tRNA(His) + AMP + diphosphate + H(+). The sequence is that of Histidine--tRNA ligase from Deinococcus radiodurans (strain ATCC 13939 / DSM 20539 / JCM 16871 / CCUG 27074 / LMG 4051 / NBRC 15346 / NCIMB 9279 / VKM B-1422 / R1).